A 352-amino-acid polypeptide reads, in one-letter code: Holliday junction branch migration complex subunit RuvB (352 aa).

The large ATPase domain (RuvB-L) stretch occupies residues 13-201 (FSLRKKELRL…FGISQKIEFY (189 aa)). ATP contacts are provided by residues R41, G82, K85, T86, T87, 148–150 (EDF), R191, Y201, and R238. T86 contributes to the Mg(2+) binding site. The tract at residues 202–273 (TYDELKQIIV…LIKKALNSYQ (72 aa)) is small ATPAse domain (RuvB-S). Residues 276–352 (EKGLDSLDRN…KYIDSKNENF (77 aa)) are head domain (RuvB-H). The DNA site is built by R330 and R335.

This sequence belongs to the RuvB family. In terms of assembly, homohexamer. Forms an RuvA(8)-RuvB(12)-Holliday junction (HJ) complex. HJ DNA is sandwiched between 2 RuvA tetramers; dsDNA enters through RuvA and exits via RuvB. An RuvB hexamer assembles on each DNA strand where it exits the tetramer. Each RuvB hexamer is contacted by two RuvA subunits (via domain III) on 2 adjacent RuvB subunits; this complex drives branch migration. In the full resolvosome a probable DNA-RuvA(4)-RuvB(12)-RuvC(2) complex forms which resolves the HJ.

The protein localises to the cytoplasm. It catalyses the reaction ATP + H2O = ADP + phosphate + H(+). The RuvA-RuvB-RuvC complex processes Holliday junction (HJ) DNA during genetic recombination and DNA repair, while the RuvA-RuvB complex plays an important role in the rescue of blocked DNA replication forks via replication fork reversal (RFR). RuvA specifically binds to HJ cruciform DNA, conferring on it an open structure. The RuvB hexamer acts as an ATP-dependent pump, pulling dsDNA into and through the RuvAB complex. RuvB forms 2 homohexamers on either side of HJ DNA bound by 1 or 2 RuvA tetramers; 4 subunits per hexamer contact DNA at a time. Coordinated motions by a converter formed by DNA-disengaged RuvB subunits stimulates ATP hydrolysis and nucleotide exchange. Immobilization of the converter enables RuvB to convert the ATP-contained energy into a lever motion, pulling 2 nucleotides of DNA out of the RuvA tetramer per ATP hydrolyzed, thus driving DNA branch migration. The RuvB motors rotate together with the DNA substrate, which together with the progressing nucleotide cycle form the mechanistic basis for DNA recombination by continuous HJ branch migration. Branch migration allows RuvC to scan DNA until it finds its consensus sequence, where it cleaves and resolves cruciform DNA. The sequence is that of Holliday junction branch migration complex subunit RuvB from Prochlorococcus marinus (strain MIT 9215).